The following is a 49-amino-acid chain: Osteocalcin (49 aa).

In terms of domain architecture, Gla spans 1 to 47 (YLDPGLGAPAPYPDPLEPKREVCELNPDCDELADHIGFQEAYRRFYG). Hydroxyproline is present on Pro9. Residues Glu17, Glu21, Glu24, and Asp30 each contribute to the Ca(2+) site. 3 positions are modified to 4-carboxyglutamate: Glu17, Glu21, and Glu24. Cys23 and Cys29 are disulfide-bonded.

It belongs to the osteocalcin/matrix Gla protein family. Post-translationally, gamma-carboxyglutamate residues are formed by vitamin K dependent carboxylation by GGCX. These residues are essential for the binding of calcium. Decarboxylation promotes the hormone activity.

It is found in the secreted. In terms of biological role, the carboxylated form is one of the main organic components of the bone matrix, which constitutes 1-2% of the total bone protein. It acts as a negative regulator of bone formation and is required to limit bone formation without impairing bone resorption or mineralization. The carboxylated form binds strongly to apatite and calcium. Functionally, the uncarboxylated form acts as a hormone secreted by osteoblasts, which regulates different cellular processes, such as energy metabolism, male fertility and brain development. Regulates of energy metabolism by acting as a hormone favoring pancreatic beta-cell proliferation, insulin secretion and sensitivity and energy expenditure. Uncarboxylated osteocalcin hormone also promotes testosterone production in the testes: acts as a ligand for G protein-coupled receptor GPRC6A at the surface of Leydig cells, initiating a signaling response that promotes the expression of enzymes required for testosterone synthesis in a CREB-dependent manner. Also acts as a regulator of brain development: osteocalcin hormone crosses the blood-brain barrier and acts as a ligand for GPR158 on neurons, initiating a signaling response that prevents neuronal apoptosis in the hippocampus, favors the synthesis of all monoamine neurotransmitters and inhibits that of gamma-aminobutyric acid (GABA). Osteocalcin also crosses the placenta during pregnancy and maternal osteocalcin is required for fetal brain development. This Capra hircus (Goat) protein is Osteocalcin (BGLAP).